The sequence spans 195 residues: Peptidyl-tRNA hydrolase (195 aa).

A tRNA-binding site is contributed by tyrosine 18. The Proton acceptor role is filled by histidine 23. TRNA contacts are provided by tyrosine 69, asparagine 71, and asparagine 117.

This sequence belongs to the PTH family. Monomer.

The protein resides in the cytoplasm. It carries out the reaction an N-acyl-L-alpha-aminoacyl-tRNA + H2O = an N-acyl-L-amino acid + a tRNA + H(+). Hydrolyzes ribosome-free peptidyl-tRNAs (with 1 or more amino acids incorporated), which drop off the ribosome during protein synthesis, or as a result of ribosome stalling. In terms of biological role, catalyzes the release of premature peptidyl moieties from peptidyl-tRNA molecules trapped in stalled 50S ribosomal subunits, and thus maintains levels of free tRNAs and 50S ribosomes. The sequence is that of Peptidyl-tRNA hydrolase from Nitrosomonas eutropha (strain DSM 101675 / C91 / Nm57).